The primary structure comprises 377 residues: tRNA N6-adenosine threonylcarbamoyltransferase (377 aa).

2 residues coordinate Fe cation: His-129 and His-133. Substrate-binding positions include Leu-151–Gly-155, Asp-184, Gly-197, and Asn-298. Asp-326 serves as a coordination point for Fe cation. The disordered stretch occupies residues Asp-358–Ala-377.

The protein belongs to the KAE1 / TsaD family. It depends on Fe(2+) as a cofactor.

The protein resides in the cytoplasm. It catalyses the reaction L-threonylcarbamoyladenylate + adenosine(37) in tRNA = N(6)-L-threonylcarbamoyladenosine(37) in tRNA + AMP + H(+). Its function is as follows. Required for the formation of a threonylcarbamoyl group on adenosine at position 37 (t(6)A37) in tRNAs that read codons beginning with adenine. Is involved in the transfer of the threonylcarbamoyl moiety of threonylcarbamoyl-AMP (TC-AMP) to the N6 group of A37, together with TsaE and TsaB. TsaD likely plays a direct catalytic role in this reaction. In Maricaulis maris (strain MCS10) (Caulobacter maris), this protein is tRNA N6-adenosine threonylcarbamoyltransferase.